Consider the following 75-residue polypeptide: UPF0270 protein Avin_35000 (75 aa).

It belongs to the UPF0270 family.

This chain is UPF0270 protein Avin_35000, found in Azotobacter vinelandii (strain DJ / ATCC BAA-1303).